An 884-amino-acid chain; its full sequence is uncharacterized protein (884 aa).

This is an uncharacterized protein from Mycobacterium tuberculosis (strain ATCC 25618 / H37Rv).